Reading from the N-terminus, the 77-residue chain is Acyl carrier protein (77 aa).

Residues 1-76 (MAIFDDVKKV…DVVNYIENLQ (76 aa)) form the Carrier domain. S36 carries the O-(pantetheine 4'-phosphoryl)serine modification.

This sequence belongs to the acyl carrier protein (ACP) family. 4'-phosphopantetheine is transferred from CoA to a specific serine of apo-ACP by AcpS. This modification is essential for activity because fatty acids are bound in thioester linkage to the sulfhydryl of the prosthetic group.

Its subcellular location is the cytoplasm. Its pathway is lipid metabolism; fatty acid biosynthesis. Functionally, carrier of the growing fatty acid chain in fatty acid biosynthesis. The chain is Acyl carrier protein from Campylobacter lari (strain RM2100 / D67 / ATCC BAA-1060).